We begin with the raw amino-acid sequence, 434 residues long: Nicotinate phosphoribosyltransferase (434 aa).

Phosphohistidine; by autocatalysis is present on H242.

Belongs to the NAPRTase family. Post-translationally, transiently phosphorylated on a His residue during the reaction cycle. Phosphorylation strongly increases the affinity for substrates and increases the rate of nicotinate D-ribonucleotide production. Dephosphorylation regenerates the low-affinity form of the enzyme, leading to product release.

It carries out the reaction nicotinate + 5-phospho-alpha-D-ribose 1-diphosphate + ATP + H2O = nicotinate beta-D-ribonucleotide + ADP + phosphate + diphosphate. Its pathway is cofactor biosynthesis; NAD(+) biosynthesis; nicotinate D-ribonucleotide from nicotinate: step 1/1. In terms of biological role, catalyzes the synthesis of beta-nicotinate D-ribonucleotide from nicotinate and 5-phospho-D-ribose 1-phosphate at the expense of ATP. The protein is Nicotinate phosphoribosyltransferase of Sinorhizobium medicae (strain WSM419) (Ensifer medicae).